The chain runs to 889 residues: Alanine--tRNA ligase (889 aa).

Zn(2+) is bound by residues His574, His578, Cys682, and His686.

This sequence belongs to the class-II aminoacyl-tRNA synthetase family. The cofactor is Zn(2+).

It localises to the cytoplasm. It carries out the reaction tRNA(Ala) + L-alanine + ATP = L-alanyl-tRNA(Ala) + AMP + diphosphate. Functionally, catalyzes the attachment of alanine to tRNA(Ala) in a two-step reaction: alanine is first activated by ATP to form Ala-AMP and then transferred to the acceptor end of tRNA(Ala). Also edits incorrectly charged Ser-tRNA(Ala) and Gly-tRNA(Ala) via its editing domain. The sequence is that of Alanine--tRNA ligase from Orientia tsutsugamushi (strain Ikeda) (Rickettsia tsutsugamushi).